A 201-amino-acid polypeptide reads, in one-letter code: Ras-related protein Rab-9A (201 aa).

The residue at position 2 (A2) is an N-acetylalanine. G17 is a binding site for GDP. Residues G17, V18, G19, K20, S21, S22, T34, H38, and T39 each contribute to the GTP site. GDP-binding residues include G19, K20, S21, and S22. Residue S21 coordinates Mg(2+). The Switch 1 signature appears at 31–42 (KFDTQLFHTIGV). Mg(2+) contacts are provided by T39 and D62. The Switch 2 motif lies at 64-78 (AGQERFRSLRTPFYR). Residues G65, N124, K125, D127, A155, and K156 each contribute to the GTP site. GDP contacts are provided by N124, K125, D127, A155, and K156. S179 is subject to Phosphoserine. Phosphothreonine is present on T187. Residues C200 and C201 are each lipidated (S-geranylgeranyl cysteine).

Belongs to the small GTPase superfamily. Rab family. As to quaternary structure, interacts (preferentially in its GTP-bound form) with GCC2 (via its GRIP domain). Interacts (GTP-bound form) with SGSM1; the GDP-bound form has much lower affinity for SGSM1. Interacts with SGSM2. The GTP-bound form but not the GDP-bound form interacts with HPS4 and BLOC-3 complex (heterodimer of HPS1 and HPS4) but does not interact with HPS1 alone. Interacts (GTP-bound form) with NDE1; two RAB9A-GTP molecules lie on the opposite sides of the NDE1 homodimer; the interaction leads to RAB9A-dynein motor tethering. Interacts (GTP-bound form) with NDEL1. The cofactor is Mg(2+).

Its subcellular location is the cell membrane. The protein resides in the endoplasmic reticulum membrane. The protein localises to the golgi apparatus membrane. It is found in the late endosome. It localises to the cytoplasmic vesicle. Its subcellular location is the phagosome membrane. The protein resides in the phagosome. The protein localises to the cytoplasmic vesicle membrane. It is found in the melanosome. It catalyses the reaction GTP + H2O = GDP + phosphate + H(+). With respect to regulation, regulated by guanine nucleotide exchange factors (GEFs) which promote the exchange of bound GDP for free GTP. Regulated by GTPase activating proteins (GAPs) which increase the GTP hydrolysis activity. Inhibited by GDP dissociation inhibitors (GDIs). Functionally, the small GTPases Rab are key regulators of intracellular membrane trafficking, from the formation of transport vesicles to their fusion with membranes. Rabs cycle between an inactive GDP-bound form and an active GTP-bound form that is able to recruit to membranes different sets of downstream effectors directly responsible for vesicle formation, movement, tethering and fusion. RAB9A is involved in the transport of proteins between the endosomes and the trans-Golgi network (TGN). Specifically uses NDE1/NDEL1 as an effector to interact with the dynein motor complex in order to control retrograde trafficking of RAB9-associated late endosomes to the TGN. Involved in the recruitment of SGSM2 to melanosomes and is required for the proper trafficking of melanogenic enzymes TYR, TYRP1 and DCT/TYRP2 to melanosomes in melanocytes. This chain is Ras-related protein Rab-9A, found in Homo sapiens (Human).